A 401-amino-acid chain; its full sequence is MASEKPQDLMVTCTAPVNIAVIKYWGKRDEALILPINSSLSVTLHQDQLKTTTTAAISKDFTEDRIWLNGREEDVGQPRLQACLREIRRLARKRRSTGDGDALPLSLGYKVHVASVNNFPTAAGLASSAAGYACLAYTLARVYGVEGDLSEVARRGSGSACRSLYGGFVEWQMGEQADGKDSIARQIAPEWHWPQLRVLILVVSAEKKPTGSTVGMQTSVATSTLLKFRAESIVPERMKEMTRCIQEQDFQAFAQLTMKDSNQFHATCLDTFPPISYLNDTSRRIIQLVHRFNAHHGQTKVAYTFDAGPNAVIFTLEDTVAEFVAAVRHSFPPAANGDKFLKGLQVAPVLLSDELKTSLATEPSPGGVQYIIATQVGPGPQVLDDPHHHLLGPDGLPQRDL.

A2 is subject to N-acetylalanine. (R)-5-diphosphomevalonate-binding positions include 24 to 27 (YWGK), R79, 157 to 162 (SGSACR), and T213. The tract at residues 382–401 (VLDDPHHHLLGPDGLPQRDL) is disordered.

Belongs to the diphosphomevalonate decarboxylase family. Homodimer.

It localises to the cytoplasm. It carries out the reaction (R)-5-diphosphomevalonate + ATP = isopentenyl diphosphate + ADP + phosphate + CO2. It functions in the pathway steroid biosynthesis; cholesterol biosynthesis. Its function is as follows. Catalyzes the ATP dependent decarboxylation of (R)-5-diphosphomevalonate to form isopentenyl diphosphate (IPP). Functions in the mevalonate (MVA) pathway leading to isopentenyl diphosphate (IPP), a key precursor for the biosynthesis of isoprenoids and sterol synthesis. This chain is Diphosphomevalonate decarboxylase (Mvd), found in Rattus norvegicus (Rat).